Consider the following 699-residue polypeptide: Extracellular matrix protein 2 (699 aa).

A signal peptide spans 1-20 (MKIAVLFCFFLLIIFQTDFG). The region spanning 101 to 158 (GHCLVKGITMYNKAVWSPEPCTTCLCSDGRVLCDETMCHPQRCPQTVIPEGECCPVCS) is the VWFC domain. Residues 176–186 (EFSGDSSEQRE) are compositionally biased toward basic and acidic residues. The tract at residues 176 to 316 (EFSGDSSEQR…PAPPRGTLRL (141 aa)) is disordered. Residues 212 to 224 (QSEEDEEVKEEDT) are compositionally biased toward acidic residues. Positions 243–260 (GDSRGGDRKQRPGEERRL) are enriched in basic and acidic residues. Over residues 270–291 (EEEEDEEEEGEEGEEDEEDEED) the composition is skewed to acidic residues. Residues 294 to 296 (RGD) carry the Cell attachment site motif. The LRRNT domain maps to 307-344 (PAPPRGTLRLPSGCSLSYRTISCINAMLTQIPPLTAPQ). 13 LRR repeats span residues 368-388 (NLER…GPKA), 394-415 (KLMR…LPST), 416-436 (LEEL…SLSD), 439-459 (QLVT…NPLA), 465-484 (SLAY…QGLP), 486-507 (SIEE…CFNH), 510-530 (KINV…APLA), 536-557 (NLES…LPKS), 558-578 (LLHL…VFGH), 582-602 (GLEY…DRVS), 609-630 (SLRE…IQEM), 632-653 (ALHF…EICN), and 661-684 (NLEH…TFSC). An N-linked (GlcNAc...) asparagine glycan is attached at Asn-378. Asn-449 carries an N-linked (GlcNAc...) asparagine glycan. The N-linked (GlcNAc...) asparagine glycan is linked to Asn-506.

This sequence belongs to the small leucine-rich proteoglycan (SLRP) family. SLRP class I subfamily. In terms of assembly, interacts with numerous extracellular matrix proteins. Interacts with MSL1 and RASSF1. Expressed predominantly in adipose tissue as well as female-specific organs such as mammary gland, ovary, and uterus.

The protein resides in the secreted. It is found in the extracellular space. It localises to the extracellular matrix. Its function is as follows. Promotes matrix assembly and cell adhesiveness. The sequence is that of Extracellular matrix protein 2 (ECM2) from Homo sapiens (Human).